The sequence spans 31 residues: Cytochrome b6-f complex subunit 8 (31 aa).

Residues Ile-5–Val-25 traverse the membrane as a helical segment.

The protein belongs to the PetN family. As to quaternary structure, the 4 large subunits of the cytochrome b6-f complex are cytochrome b6, subunit IV (17 kDa polypeptide, PetD), cytochrome f and the Rieske protein, while the 4 small subunits are PetG, PetL, PetM and PetN. The complex functions as a dimer.

The protein resides in the plastid. It is found in the chloroplast thylakoid membrane. Its function is as follows. Component of the cytochrome b6-f complex, which mediates electron transfer between photosystem II (PSII) and photosystem I (PSI), cyclic electron flow around PSI, and state transitions. The chain is Cytochrome b6-f complex subunit 8 from Acorus calamus (Sweet flag).